Reading from the N-terminus, the 311-residue chain is Dihydroorotate dehydrogenase A (fumarate) (311 aa).

FMN-binding positions include Ser19 and 43–44 (KS). Substrate contacts are provided by residues Lys43, 67–71 (NSMGL), and Asn127. Asn127 contacts FMN. Catalysis depends on Cys130, which acts as the Nucleophile. Lys164 and Val192 together coordinate FMN. 193–194 (NS) contacts substrate. FMN contacts are provided by residues Gly221, 249-250 (GG), and 271-272 (GT).

Belongs to the dihydroorotate dehydrogenase family. Type 1 subfamily. In terms of assembly, homodimer. FMN is required as a cofactor.

The protein resides in the cytoplasm. It carries out the reaction (S)-dihydroorotate + fumarate = orotate + succinate. It participates in pyrimidine metabolism; UMP biosynthesis via de novo pathway. Catalyzes the conversion of dihydroorotate to orotate with fumarate as the electron acceptor. The protein is Dihydroorotate dehydrogenase A (fumarate) (pyrDA) of Lactococcus lactis subsp. cremoris (Streptococcus cremoris).